The following is a 662-amino-acid chain: ATP-dependent RNA helicase DDX3X (662 aa).

Serine 2 carries the N-acetylserine modification. The interval 2-139 is required for TBK1 and IKBKE-dependent IFNB1 activation; that stretch reads SHVAVENALG…KSDEDDWSKP (138 aa). The Nuclear export signal motif lies at 12-21; sequence LDQQFAGLDL. A disordered region spans residues 19–144; it reads LDLNSSDNQS…DWSKPLPPSE (126 aa). Polar residues predominate over residues 21–34; that stretch reads LNSSDNQSGGSTAS. The interval 38-44 is interaction with EIF4E; that stretch reads YIPPHLR. Positions 44-68 are enriched in basic and acidic residues; the sequence is RNREATKGFYDKDSSGWSSSKDKDA. At lysine 55 the chain carries N6-acetyllysine. Serine 82 and serine 90 each carry phosphoserine. A compositionally biased stretch (basic and acidic residues) spans 94–130; that stretch reads GRFDDRGRGDYDGIGGRGDRSGFGKFERGGNSRWCDK. The interval 100 to 110 is interaction with IKBKE; sequence GRGDYDGIGGR. Positions 100–662 are interaction with GSK3B; the sequence is GRGDYDGIGG…NSQGVDWWGN (563 aa). The residue at position 101 (arginine 101) is an Omega-N-methylarginine. Residue tyrosine 104 is modified to Phosphotyrosine. Arginine 110 is subject to Omega-N-methylarginine. The residue at position 118 (lysine 118) is an N6-acetyllysine. Phosphoserine is present on serine 131. Residues 139 to 172 are interaction with CHUK; that stretch reads PLPPSERLEQELFSGGNTGINFEKYDDIPVEATG. Residues 180–208 carry the Q motif motif; sequence ESFSDVEMGEIIMGNIELTRYTRPTPVQK. At serine 183 the chain carries Phosphoserine. 200–207 is an ATP binding site; sequence YTRPTPVQ. Residues 211–403 form the Helicase ATP-binding domain; sequence IPIIKEKRDL…RDFLDEYIFL (193 aa). A Glycyl lysine isopeptide (Lys-Gly) (interchain with G-Cter in SUMO2) cross-link involves residue lysine 215. Residue 224–231 participates in ATP binding; the sequence is AQTGSGKT. The involved in stimulation of ATPase activity by DNA and RNA, nucleic acid binding and unwinding stretch occupies residues 250 to 259; the sequence is ALRAMKENGR. The short motif at 347–350 is the DEAD box element; sequence DEAD. The Helicase C-terminal domain maps to 414 to 575; sequence NITQKVVWVE…EVPSWLENMA (162 aa). Serine 456 carries the post-translational modification Phosphoserine. Positions 536–661 are interaction with NXF1; sequence GNLGLATSFF…YNSQGVDWWG (126 aa). At arginine 592 the chain carries Omega-N-methylarginine. A phosphoserine mark is found at serine 594, serine 605, and serine 612. Positions 601–633 are disordered; that stretch reads DYRQSSGASSSSFSSSRASSSRSGGGGHGGSRG. Over residues 604-622 the composition is skewed to low complexity; sequence QSSGASSSSFSSSRASSSR. An omega-N-methylarginine mark is found at arginine 617 and arginine 632. A compositionally biased stretch (gly residues) spans 623 to 633; the sequence is SGGGGHGGSRG.

Belongs to the DEAD box helicase family. DDX3/DED1 subfamily. Homodimer; can bind RNA as a monomer and as a dimer/oligomer. Interacts with TDRD3. When phosphorylated, interacts with IRF3; the interaction facilitates the phosphorylation and activation of IRF3 by IKBKE. Directly interacts with XPO1/CRM1. The interaction with XPO1/CMR1 is dependent on the DDX3X nuclear export signal motif and XPO1 interaction with GTPase RAN in its active GTP-bound form. Weakly interacts with TBKBP1/SINTBAD. Directly interacts with TRAF3; this interaction stimulates TRAF3 'Lys-63' ubiquitination. Interacts with CSNK1E in a Wnt-dependent manner; this interaction greatly enhances CSNK1E affinity for ATP, stimulates its kinase activity and promotes CSNK1E-mediated DVL2 phosphorylation. In the presence of RNA, the interaction is decreased. Also interacts with CSNK1D and stimulates its kinase activity. Interacts with TRPV4; this interaction is decreased when the TRPV4 channel is activated, leading to DDX3X relocalization to the nucleus. Interacts with MAP3K14/NIK. Directly interacts with CHUK/IKKA after physiological activation of the TLR7 and TLR8 pathways; this interaction enhances CHUK autophosphorylation. May associate with EIF4F complex, composed of at least EIF4A, EIF4E and EIF4G1/EIF4G3. Directly interacts with EIF4E in an RNA-independent manner; this interaction enhances EIF4E cap-binding ability. Directly interacts with EIF4G1 in an RNA-independent manner. DDX3X competes with EIF4G1 for interaction with EIF4E. Interacts with EIF4A1 and EIF2S1 in an RNA-independent manner. Associates with the eukaryotic translation initiation factor 3 (eIF-3) complex, including with EIF3B and EIF3C subunits. Directly interacts with IKBKE/IKKE; this interaction stimulates IKBKE activating autophosphorylation and is induced upon viral infection. Interacts with TBK1. Interacts with SP1; this interaction potentiates SP1-induced CDKN1A/WAF1/CIP1 transcription. Interacts with GSK3A and GSK3B. Interacts with several death receptors, inclusing FAS, TNFRSF10A and TNFRSF10B. Recruited to TNFRSF10B in the absence of receptor stimulation. When TNFRSF10B is stimulated, further recruited to the receptor and cleaved by caspases. A large proteolytic fragment remains associated with TNFRSF10B. Interacts (via C-terminus) with NXF1/TAP; this interaction may be partly involved in DDX3X nuclear export and in NXF1 localization to stress granules. Identified in an mRNP complex, composed of at least DHX9, DDX3X, ELAVL1, HNRNPU, IGF2BP1/2, ILF3, PABPC1, PCBP2, PTBP2, STAU1, STAU2, SYNCRIP and YBX1. The interaction with IGF2BP1/2 is RNA-dependent. Directly interacts with PABPC1/PABP1 in an RNA-independent manner. This interaction increases in stressed cells and decreases during cell recovery. Interacts (via C-terminus) with MAVS/IPS-1; this interaction potentiates MAVS-mediated IFNB induction. Interacts with ERCC6/CBS. Interacts with DHX33 in an RNA-independent manner. Interacts with DDX5 in the cytoplasm; this interaction may be more efficient when both proteins are unphosphorylated. Interacts with RIGI. Interacts with IFIH1/MDA5. Interacts with NCAPH; this interaction may be important for the NCAPH localization at condensing chromosomes during mitosis. Interacts with NLRP3 (via NACHT domain) under inflammasome-activating conditions. Interacts with CAPRIN1. Interacts with HNF4A and NR0B2/SHP in an RNA-independent manner; this interaction disrupts the interaction between HNF4 and NR0B2 that forms inactive heterodimers and enhances the formation of active HNF4 homodimers. Interacts with CREBBP/CBP. Interacts with EP300/p300. Interacts with gamma-tubulin. Interacts with phosphorylated TP53. Directly interacts with RELA/p65; this interaction may trap RELA in the cytoplasm, impairing nuclear relocalization upon TNF activating signals. Phosphorylated by TBK1; the phosphorylation is required for the synergistic induction of IFNB mediated by TBK1 and DDX3X. Phosphorylated by IKBKE. Also phosphorylated by CSNK1E; this phosphorylation may inhibit RNA-stimulated ATPase activity. In terms of processing, upon stimulation of death receptors, including TNFRSF10B, recruited to receptors and cleaved by caspases. Proteolytic fragments remain associated with the receptors. This cleavage presumably inactivates DDX3X anti-apoptotic function. Post-translationally, ubiquitinated by RNF39 via 'Lys-48'-linked ubiquitination; leading to proteasomal degradation. In terms of tissue distribution, expressed in ovary, including in germinal vesicle immature and metaphase II (MII) stage oocytes (at protein level). In the brain, expressed in the granule cells of the cerebellum and dentate gyrus, the pyramidal cells of the hippocampus, the ependymal cells lining the ventricles, choroid plexi and olfactory bulb. Also accumulates in the thalamic nuclei, the dorsal region of the colliculi and the pontine nucleus.

The protein localises to the cell membrane. The protein resides in the nucleus. It is found in the cytoplasm. It localises to the stress granule. Its subcellular location is the inflammasome. The protein localises to the cell projection. The protein resides in the lamellipodium. The catalysed reaction is ATP + H2O = ADP + phosphate + H(+). In terms of biological role, multifunctional ATP-dependent RNA helicase. The ATPase activity can be stimulated by various ribo-and deoxynucleic acids indicative for a relaxed substrate specificity. In vitro can unwind partially double-stranded DNA with a preference for 5'-single-stranded DNA overhangs. Binds RNA G-quadruplex (rG4s) structures, including those located in the 5'-UTR of NRAS mRNA. Involved in many cellular processes, which do not necessarily require its ATPase/helicase catalytic activities. Involved in transcription regulation. Positively regulates CDKN1A/WAF1/CIP1 transcription in an SP1-dependent manner, hence inhibits cell growth. This function requires its ATPase, but not helicase activity. CDKN1A up-regulation may be cell-type specific. Binds CDH1/E-cadherin promoter and represses its transcription. Potentiates HNF4A-mediated MTTP transcriptional activation; this function requires ATPase, but not helicase activity. Facilitates HNF4A acetylation, possibly catalyzed by CREBBP/EP300, thereby increasing the DNA-binding affinity of HNF4 to its response element. In addition, disrupts the interaction between HNF4 and SHP that forms inactive heterodimers and enhances the formation of active HNF4 homodimers. By promoting HNF4A-induced MTTP expression, may play a role in lipid homeostasis. May positively regulate TP53 transcription. Associates with mRNPs, predominantly with spliced mRNAs carrying an exon junction complex (EJC). Involved in the regulation of translation initiation. Not involved in the general process of translation, but promotes efficient translation of selected complex mRNAs, containing highly structured 5'-untranslated regions (UTR). This function depends on helicase activity. Might facilitate translation by resolving secondary structures of 5'-UTRs during ribosome scanning. Alternatively, may act prior to 43S ribosomal scanning and promote 43S pre-initiation complex entry to mRNAs exhibiting specific RNA motifs, by performing local remodeling of transcript structures located close to the cap moiety. Independently of its ATPase activity, promotes the assembly of functional 80S ribosomes and disassembles from ribosomes prior to the translation elongation process. Positively regulates the translation of cyclin E1/CCNE1 mRNA and consequently promotes G1/S-phase transition during the cell cycle. May activate TP53 translation. Required for endoplasmic reticulum stress-induced ATF4 mRNA translation. Independently of its ATPase/helicase activity, enhances IRES-mediated translation; this activity requires interaction with EIF4E. Independently of its ATPase/helicase activity, has also been shown specifically repress cap-dependent translation, possibly by acting on translation initiation factor EIF4E. Involved in innate immunity, acting as a viral RNA sensor. Binds viral RNAs and promotes the production of type I interferon (IFN-alpha and IFN-beta). Potentiate MAVS/RIGI-mediated induction of IFNB in early stages of infection. Enhances IFNB1 expression via IRF3/IRF7 pathway and participates in NFKB activation in the presence of MAVS and TBK1. Involved in TBK1 and IKBKE-dependent IRF3 activation leading to IFNB induction, acts as a scaffolding adapter that links IKBKE and IRF3 and coordinates their activation. Involved in the TLR7/TLR8 signaling pathway leading to type I interferon induction, including IFNA4 production. In this context, acts as an upstream regulator of IRF7 activation by MAP3K14/NIK and CHUK/IKKA. Stimulates CHUK autophosphorylation and activation following physiological activation of the TLR7 and TLR8 pathways, leading to MAP3K14/CHUK-mediated activatory phosphorylation of IRF7. Also stimulates MAP3K14/CHUK-dependent NF-kappa-B signaling. Negatively regulates TNF-induced IL6 and IL8 expression, via the NF-kappa-B pathway. May act by interacting with RELA/p65 and trapping it in the cytoplasm. May also bind IFNB promoter; the function is independent of IRF3. Involved in both stress and inflammatory responses. Independently of its ATPase/helicase activity, required for efficient stress granule assembly through its interaction with EIF4E, hence promotes survival in stressed cells. Independently of its helicase activity, regulates NLRP3 inflammasome assembly through interaction with NLRP3 and hence promotes cell death by pyroptosis during inflammation. This function is independent of helicase activity. Therefore DDX3X availability may be used to interpret stress signals and choose between pro-survival stress granules and pyroptotic NLRP3 inflammasomes and serve as a live-or-die checkpoint in stressed cells. In association with GSK3A/B, negatively regulates extrinsic apoptotic signaling pathway via death domain receptors, including TNFRSF10B, slowing down the rate of CASP3 activation following death receptor stimulation. Cleavage by caspases may inactivate DDX3X and relieve the inhibition. Independently of its ATPase/helicase activity, allosteric activator of CSNK1E. Stimulates CSNK1E-mediated phosphorylation of DVL2, thereby involved in the positive regulation of Wnt/beta-catenin signaling pathway. Also activates CSNK1A1 and CSNK1D in vitro, but it is uncertain if these targets are physiologically relevant. ATPase and casein kinase-activating functions are mutually exclusive. May be involved in mitotic chromosome segregation. The polypeptide is ATP-dependent RNA helicase DDX3X (Ddx3x) (Mus musculus (Mouse)).